We begin with the raw amino-acid sequence, 276 residues long: Shikimate dehydrogenase (NADP(+)) (276 aa).

Shikimate is bound by residues 15-17 (SMS) and threonine 63. Lysine 67 serves as the catalytic Proton acceptor. Residue aspartate 79 coordinates NADP(+). Residues asparagine 88 and aspartate 103 each contribute to the shikimate site. NADP(+) is bound by residues 130–134 (GAGGA), 154–159 (NRTLSR), and isoleucine 217. Residue tyrosine 219 coordinates shikimate. Residue glycine 240 coordinates NADP(+).

Belongs to the shikimate dehydrogenase family. As to quaternary structure, homodimer.

The catalysed reaction is shikimate + NADP(+) = 3-dehydroshikimate + NADPH + H(+). It functions in the pathway metabolic intermediate biosynthesis; chorismate biosynthesis; chorismate from D-erythrose 4-phosphate and phosphoenolpyruvate: step 4/7. In terms of biological role, involved in the biosynthesis of the chorismate, which leads to the biosynthesis of aromatic amino acids. Catalyzes the reversible NADPH linked reduction of 3-dehydroshikimate (DHSA) to yield shikimate (SA). This chain is Shikimate dehydrogenase (NADP(+)), found in Oceanobacillus iheyensis (strain DSM 14371 / CIP 107618 / JCM 11309 / KCTC 3954 / HTE831).